A 238-amino-acid chain; its full sequence is Dolichyldiphosphatase 1 (238 aa).

The next 4 membrane-spanning stretches (helical) occupy residues L33 to F53, P100 to L120, F130 to V150, and W162 to F182.

Belongs to the dolichyldiphosphatase family.

The protein localises to the endoplasmic reticulum membrane. The enzyme catalyses a di-trans,poly-cis-dolichyl diphosphate + H2O = a di-trans,poly-cis-dolichyl phosphate + phosphate + H(+). It participates in protein modification; protein glycosylation. Its function is as follows. Required for efficient N-glycosylation. Necessary for maintaining optimal levels of dolichol-linked oligosaccharides. Hydrolyzes dolichyl pyrophosphate at a very high rate and dolichyl monophosphate at a much lower rate. Does not act on phosphatidate. This is Dolichyldiphosphatase 1 (DOLPP1) from Rhinolophus ferrumequinum (Greater horseshoe bat).